The primary structure comprises 87 residues: Small ribosomal subunit protein bS20 (87 aa).

Positions 1–26 (MANIKSAQKRAVQSEKRRQHNASQRS) are disordered.

It belongs to the bacterial ribosomal protein bS20 family.

Binds directly to 16S ribosomal RNA. The protein is Small ribosomal subunit protein bS20 of Glaesserella parasuis serovar 5 (strain SH0165) (Haemophilus parasuis).